Consider the following 34-residue polypeptide: MEVNILAFIAIVLFISVPTAFLLIIYVKTVSESN.

A helical membrane pass occupies residues Ile-5–Ile-25.

It belongs to the PsbM family. In terms of assembly, PSII is composed of 1 copy each of membrane proteins PsbA, PsbB, PsbC, PsbD, PsbE, PsbF, PsbH, PsbI, PsbJ, PsbK, PsbL, PsbM, PsbT, PsbX, PsbY, PsbZ, Psb30/Ycf12, at least 3 peripheral proteins of the oxygen-evolving complex and a large number of cofactors. It forms dimeric complexes.

The protein resides in the plastid. Its subcellular location is the chloroplast thylakoid membrane. One of the components of the core complex of photosystem II (PSII). PSII is a light-driven water:plastoquinone oxidoreductase that uses light energy to abstract electrons from H(2)O, generating O(2) and a proton gradient subsequently used for ATP formation. It consists of a core antenna complex that captures photons, and an electron transfer chain that converts photonic excitation into a charge separation. This subunit is found at the monomer-monomer interface. The polypeptide is Photosystem II reaction center protein M (Cycas taitungensis (Prince sago)).